We begin with the raw amino-acid sequence, 420 residues long: Proteinase-activated receptor 1 (420 aa).

Residues methionine 1–glycine 20 form the signal peptide. A propeptide spans serine 21–lysine 42 (removed for receptor activation). Asparagine 38 carries N-linked (GlcNAc...) asparagine glycosylation. Topologically, residues threonine 43 to threonine 101 are extracellular. The interval glutamate 61–arginine 80 is disordered. Residue asparagine 86 is glycosylated (N-linked (GlcNAc...) asparagine). A helical membrane pass occupies residues lysine 102–leucine 127. Residues phenylalanine 128–alanine 136 are Cytoplasmic-facing. Residues valine 137–phenylalanine 156 traverse the membrane as a helical segment. At lysine 157–arginine 175 the chain is on the extracellular side. Cysteine 174 and cysteine 253 are joined by a disulfide. Residues isoleucine 176–valine 197 form a helical membrane-spanning segment. Topologically, residues aspartate 198–arginine 217 are cytoplasmic. Residues alanine 218–valine 238 form a helical membrane-spanning segment. Topologically, residues threonine 239–isoleucine 267 are extracellular. The helical transmembrane segment at tyrosine 268–isoleucine 287 threads the bilayer. Residues cysteine 288 to alanine 310 lie on the Cytoplasmic side of the membrane. Residues leucine 311–leucine 333 traverse the membrane as a helical segment. Residues threonine 334–tyrosine 345 are Extracellular-facing. Residues phenylalanine 346 to alanine 369 traverse the membrane as a helical segment. At serine 370–alanine 420 the chain is on the cytoplasmic side.

This sequence belongs to the G-protein coupled receptor 1 family. Post-translationally, proteolytic cleavage generates a new N-terminus that functions as a tethered ligand.

The protein resides in the cell membrane. In terms of biological role, high affinity receptor that binds the activated thrombin, leading to calcium release from intracellular stores. The thrombin-activated receptor signaling pathway is mediated through PTX-insensitive G proteins, activation of phospholipase C resulting in the production of 1D-myo-inositol 1,4,5-trisphosphate (InsP3) which binds to InsP3 receptors causing calcium release from the stores. This chain is Proteinase-activated receptor 1, found in Xenopus laevis (African clawed frog).